Reading from the N-terminus, the 171-residue chain is 3-hydroxydecanoyl-[acyl-carrier-protein] dehydratase (171 aa).

His70 is an active-site residue.

The protein belongs to the thioester dehydratase family. FabA subfamily. Homodimer.

It localises to the cytoplasm. It catalyses the reaction a (3R)-hydroxyacyl-[ACP] = a (2E)-enoyl-[ACP] + H2O. The catalysed reaction is (3R)-hydroxydecanoyl-[ACP] = (2E)-decenoyl-[ACP] + H2O. The enzyme catalyses (2E)-decenoyl-[ACP] = (3Z)-decenoyl-[ACP]. Its pathway is lipid metabolism; fatty acid biosynthesis. Its function is as follows. Necessary for the introduction of cis unsaturation into fatty acids. Catalyzes the dehydration of (3R)-3-hydroxydecanoyl-ACP to E-(2)-decenoyl-ACP and then its isomerization to Z-(3)-decenoyl-ACP. Can catalyze the dehydratase reaction for beta-hydroxyacyl-ACPs with saturated chain lengths up to 16:0, being most active on intermediate chain length. The chain is 3-hydroxydecanoyl-[acyl-carrier-protein] dehydratase from Chromohalobacter salexigens (strain ATCC BAA-138 / DSM 3043 / CIP 106854 / NCIMB 13768 / 1H11).